Consider the following 187-residue polypeptide: MYSTTVLATGTKDTSLVNRIFGLDMQLVVDVAIMGLAIFVLFLILSYLLFNPARELLQKRQDRIKEEMDSSAKDKKEATQLKTNYEAKIKEASKEVDEILSEGRKKALKRENDIVDEAKVEASRIVDRANKEIELNKSKMKDEVKQEMIAVASVMAGKIIAGNIDETKQKQLIDEALNEMGDETWQN.

Residues V31–N51 form a helical membrane-spanning segment.

It belongs to the ATPase B chain family. As to quaternary structure, F-type ATPases have 2 components, F(1) - the catalytic core - and F(0) - the membrane proton channel. F(1) has five subunits: alpha(3), beta(3), gamma(1), delta(1), epsilon(1). F(0) has three main subunits: a(1), b(2) and c(10-14). The alpha and beta chains form an alternating ring which encloses part of the gamma chain. F(1) is attached to F(0) by a central stalk formed by the gamma and epsilon chains, while a peripheral stalk is formed by the delta and b chains.

The protein localises to the cell membrane. In terms of biological role, f(1)F(0) ATP synthase produces ATP from ADP in the presence of a proton or sodium gradient. F-type ATPases consist of two structural domains, F(1) containing the extramembraneous catalytic core and F(0) containing the membrane proton channel, linked together by a central stalk and a peripheral stalk. During catalysis, ATP synthesis in the catalytic domain of F(1) is coupled via a rotary mechanism of the central stalk subunits to proton translocation. Its function is as follows. Component of the F(0) channel, it forms part of the peripheral stalk, linking F(1) to F(0). In Lachnoclostridium phytofermentans (strain ATCC 700394 / DSM 18823 / ISDg) (Clostridium phytofermentans), this protein is ATP synthase subunit b.